The following is a 432-amino-acid chain: Alcohol acyltransferase 9 (432 aa).

Residues H156 and D379 each act as proton acceptor in the active site.

The protein belongs to the plant acyltransferase family.

It catalyses the reaction 2-(methylsulfanyl)acetyl-CoA + butan-1-ol = butyl 2-(methylsulfanyl)acetate + CoA. It carries out the reaction ethanol + acetyl-CoA = ethyl acetate + CoA. The enzyme catalyses butan-1-ol + acetyl-CoA = butyl acetate + CoA. The catalysed reaction is butan-1-ol + propanoyl-CoA = butyl propanoate + CoA. Its function is as follows. Involved in the biosynthesis of volatile esters which confer kiwifruit flavor. Alcohol acyl transferase that can use a wide range of alcohols as substrate to produce esters. Exhibits acetyl-CoA:alcohol O-acyltransferase activity. In Actinidia chinensis var. chinensis (Chinese soft-hair kiwi), this protein is Alcohol acyltransferase 9.